Consider the following 631-residue polypeptide: 1-deoxy-D-xylulose-5-phosphate synthase (631 aa).

Thiamine diphosphate-binding positions include H78 and 119–121 (AHS). D150 serves as a coordination point for Mg(2+). Residues 151 to 152 (GA), N179, Y286, and E368 contribute to the thiamine diphosphate site. Position 179 (N179) interacts with Mg(2+).

It belongs to the transketolase family. DXPS subfamily. Homodimer. Mg(2+) is required as a cofactor. Requires thiamine diphosphate as cofactor.

The enzyme catalyses D-glyceraldehyde 3-phosphate + pyruvate + H(+) = 1-deoxy-D-xylulose 5-phosphate + CO2. Its pathway is metabolic intermediate biosynthesis; 1-deoxy-D-xylulose 5-phosphate biosynthesis; 1-deoxy-D-xylulose 5-phosphate from D-glyceraldehyde 3-phosphate and pyruvate: step 1/1. In terms of biological role, catalyzes the acyloin condensation reaction between C atoms 2 and 3 of pyruvate and glyceraldehyde 3-phosphate to yield 1-deoxy-D-xylulose-5-phosphate (DXP). The polypeptide is 1-deoxy-D-xylulose-5-phosphate synthase (Verminephrobacter eiseniae (strain EF01-2)).